The following is a 217-amino-acid chain: Small ribosomal subunit protein uS3 (217 aa).

Positions 38 to 106 (IRNFIKKELA…QVHINIIEIK (69 aa)) constitute a KH type-2 domain.

The protein belongs to the universal ribosomal protein uS3 family. As to quaternary structure, part of the 30S ribosomal subunit. Forms a tight complex with proteins S10 and S14.

Its function is as follows. Binds the lower part of the 30S subunit head. Binds mRNA in the 70S ribosome, positioning it for translation. This chain is Small ribosomal subunit protein uS3, found in Streptococcus suis (strain 98HAH33).